Consider the following 551-residue polypeptide: Adenylyl cyclase-associated protein (551 aa).

The tract at residues 34-55 (SGHKPLPNMHRPSRDSNSQTHN) is disordered. Phosphoserine is present on S92. T96 is modified (phosphothreonine). A compositionally biased stretch (polar residues) spans 288 to 300 (SASKTQAPSSGDS). Disordered stretches follow at residues 288 to 333 (SASK…NKGD) and 348 to 395 (TSGL…PVKP). Residues 305-315 (LPPPPPPPPPS) show a composition bias toward pro residues. A compositionally biased stretch (basic and acidic residues) spans 352 to 361 (RKVDKSEMTH). A C-CAP/cofactor C-like domain is found at 395 to 529 (PPRIELENTK…EEGDYAERAV (135 aa)).

The protein belongs to the CAP family.

The N-terminal domain binds to adenylyl cyclase, thereby enabling adenylyl cyclase to be activated by upstream regulatory signals, such as Ras. The C-terminal domain is required for normal cellular morphology and growth control. This Schizosaccharomyces pombe (strain 972 / ATCC 24843) (Fission yeast) protein is Adenylyl cyclase-associated protein (cap1).